A 1549-amino-acid polypeptide reads, in one-letter code: VPS10 homolog 1 (1549 aa).

An N-terminal signal peptide occupies residues 1 to 21 (MALFRALYIIWVFLLIPLSNA). Over 22–1369 (EEFTPKVTRT…AFREKYSINT (1348 aa)) the chain is Lumenal. BNR repeat units follow at residues 57–68 (EISFDAGENWKT), 101–112 (YVTDDQGKSWRP), 159–170 (IYTTNDGVSFSQ), 228–239 (ILSADGGETFKE), 393–404 (KVSVDNGLTWTN), and 465–476 (FISRDSGLTWRL). N-linked (GlcNAc...) asparagine glycosylation is present at Asn479. BNR repeat units lie at residues 511–522 (YYSLDQGKTWGE) and 740–751 (YISHDGGQTIKR). Asn769 is a glycosylation site (N-linked (GlcNAc...) asparagine). The BNR 9 repeat unit spans residues 837 to 848 (YLTKDGGETFTE). Residue Asn986 is glycosylated (N-linked (GlcNAc...) asparagine). 3 BNR repeats span residues 1040-1051 (KITFNDGSDWNF), 1119-1130 (FLTTDGGETWTE), and 1160-1171 (SYSTDFGKTWKD). The helical transmembrane segment at 1370 to 1390 (GAYALVFVTILLVIFFVAWFV) threads the bilayer. Topologically, residues 1391 to 1549 (YDRGIRRNGG…DLAAARSEDK (159 aa)) are cytoplasmic. Residues 1479 to 1549 (EPDGFHEDSN…DLAAARSEDK (71 aa)) are disordered. Residues 1489-1501 (DLSSFRGQGSNSE) are compositionally biased toward polar residues. The segment covering 1535 to 1549 (ASHESDLAAARSEDK) has biased composition (basic and acidic residues).

This sequence belongs to the VPS10-related sortilin family.

The protein resides in the golgi apparatus. Its subcellular location is the trans-Golgi network membrane. It is found in the endosome membrane. Functionally, functions as a sorting receptor in the Golgi compartment required for the intracellular sorting and delivery of soluble vacuolar proteins, like carboxypeptidase Y (CPY) and proteinase A. This chain is VPS10 homolog 1 (VTH1), found in Saccharomyces cerevisiae (strain ATCC 204508 / S288c) (Baker's yeast).